Here is a 182-residue protein sequence, read N- to C-terminus: Ribosome maturation factor RimM (182 aa).

The PRC barrel domain occupies 102–182; it reads EEGDYYWKDL…TIEVDWDPGF (81 aa).

It belongs to the RimM family. In terms of assembly, binds ribosomal protein uS19.

It is found in the cytoplasm. In terms of biological role, an accessory protein needed during the final step in the assembly of 30S ribosomal subunit, possibly for assembly of the head region. Essential for efficient processing of 16S rRNA. May be needed both before and after RbfA during the maturation of 16S rRNA. It has affinity for free ribosomal 30S subunits but not for 70S ribosomes. This chain is Ribosome maturation factor RimM, found in Salmonella gallinarum (strain 287/91 / NCTC 13346).